The chain runs to 151 residues: Prefoldin subunit alpha (151 aa).

It belongs to the prefoldin subunit alpha family. Heterohexamer of two alpha and four beta subunits.

It localises to the cytoplasm. Functionally, molecular chaperone capable of stabilizing a range of proteins. Seems to fulfill an ATP-independent, HSP70-like function in archaeal de novo protein folding. In Sulfurisphaera tokodaii (strain DSM 16993 / JCM 10545 / NBRC 100140 / 7) (Sulfolobus tokodaii), this protein is Prefoldin subunit alpha.